A 228-amino-acid polypeptide reads, in one-letter code: MKWKDWVHVTKLDPDKQLGPGDIDAIAASGTDALMLSGTLNVTKENLLALQKMIAQYDLPLVMEPAGPEAVLMEGIEYVFVPSVLNTTDVQWIVGKHRSWVQQQDGKIPWDMVVPEAYIVLNPASSVGRVTKAVCDLKPAEVAAYTEVADRYFHFPIVYIEYSGTYGAPAVVKAAAEAIDHAILYYGGGINSAEKAAEMGKYADTIVVGNAVYDQGASVLKATVDAVQ.

K11 is a sn-glycerol 1-phosphate binding site. The Mg(2+) site is built by D13 and T39. Sn-glycerol 1-phosphate-binding positions include Y159–G164, G189, and G209–N210.

This sequence belongs to the GGGP/HepGP synthase family. Group I subfamily. Mg(2+) serves as cofactor.

It is found in the cytoplasm. The catalysed reaction is sn-glycerol 1-phosphate + (2E,6E,10E)-geranylgeranyl diphosphate = sn-3-O-(geranylgeranyl)glycerol 1-phosphate + diphosphate. The protein operates within membrane lipid metabolism; glycerophospholipid metabolism. Its function is as follows. Prenyltransferase that catalyzes the transfer of the geranylgeranyl moiety of geranylgeranyl diphosphate (GGPP) to the C3 hydroxyl of sn-glycerol-1-phosphate (G1P). This reaction is the first ether-bond-formation step in the biosynthesis of archaeal membrane lipids. This is Geranylgeranylglyceryl phosphate synthase from Methanoregula boonei (strain DSM 21154 / JCM 14090 / 6A8).